The following is a 143-amino-acid chain: Large ribosomal subunit protein uL11 (143 aa).

It belongs to the universal ribosomal protein uL11 family. As to quaternary structure, part of the ribosomal stalk of the 50S ribosomal subunit. Interacts with L10 and the large rRNA to form the base of the stalk. L10 forms an elongated spine to which L12 dimers bind in a sequential fashion forming a multimeric L10(L12)X complex. Post-translationally, one or more lysine residues are methylated.

In terms of biological role, forms part of the ribosomal stalk which helps the ribosome interact with GTP-bound translation factors. In Pseudomonas syringae pv. tomato (strain ATCC BAA-871 / DC3000), this protein is Large ribosomal subunit protein uL11.